Reading from the N-terminus, the 482-residue chain is MKQLEKITPLEKDFAQWYTDVVTNGNLMNYGPAKGTIIYKPNSYGIWENIQKTLNEVFKKHGVENIYAPLFIPESLFKIEKEHVQGFNPELATVTQVGNKKLSEKLIVRPTSEVIFANLFKEDINSYNDLPKIYNQWANVVRWEKVTKPFLRTREFLWQEGHTSHSSAEEARSFTVKMIKEYEKFLKNYLAIPVVSGKKTCNEKFAGAVSTYTVEAMMKDGKALQTGTSHYLGQKFSRPYGISFKNKNNEEDFVYQTSWGVSTRLLGAIIMVHGDNRGVIIPPKIAPIKVDILEILADKNPEVSKVANKIYKELSKKLSVRLDASNKSPGFKASQSEIEGVPLRIEVGPRDLENNCVTFVRRDTLEKTKVDLENVKKEVNNYLKLIQNNLYQAAKQRLEENTVYAYNYEDFKKHIVDNKFVVVPFCCVTKKEIEIKEETGATPRCILKKVKPRGVKLECVCKSDGCCDDDKAIKYVVFARAY.

This sequence belongs to the class-II aminoacyl-tRNA synthetase family. ProS type 3 subfamily. In terms of assembly, homodimer.

It localises to the cytoplasm. The catalysed reaction is tRNA(Pro) + L-proline + ATP = L-prolyl-tRNA(Pro) + AMP + diphosphate. In terms of biological role, catalyzes the attachment of proline to tRNA(Pro) in a two-step reaction: proline is first activated by ATP to form Pro-AMP and then transferred to the acceptor end of tRNA(Pro). In Mycoplasmopsis synoviae (strain 53) (Mycoplasma synoviae), this protein is Proline--tRNA ligase.